The chain runs to 160 residues: MSEPQQQQVNLGSLSLEQLQMVREQVEAEIQQLSESIQQLKHASNKYIEAKEAMGGLKGTDGKDMLVPLTSSIYLPGKINSNEKVLVDIGTGYYVEMGIEQGQNFSNRKVQLITEQVNKVQTAINMKRQNLESIVQVAQSKISLYKQQQAQQSQQQVQQK.

Belongs to the prefoldin subunit alpha family. Heterohexamer of two PFD-alpha type and four PFD-beta type subunits.

Binds specifically to cytosolic chaperonin (c-CPN) and transfers target proteins to it. Binds to nascent polypeptide chain and promotes folding in an environment in which there are many competing pathways for nonnative proteins. In Dictyostelium discoideum (Social amoeba), this protein is Probable prefoldin subunit 5 (pfdn5).